A 554-amino-acid polypeptide reads, in one-letter code: Undecaprenyl phosphate-alpha-4-amino-4-deoxy-L-arabinose arabinosyl transferase (554 aa).

The next 11 helical transmembrane spans lie at L4–V24, F87–L107, V115–V135, F178–I198, L206–L226, Y262–F282, E293–G313, L315–T335, V351–L371, Q384–L404, and A414–V434.

This sequence belongs to the glycosyltransferase 83 family.

The protein localises to the cell inner membrane. It catalyses the reaction 4-amino-4-deoxy-alpha-L-arabinopyranosyl di-trans,octa-cis-undecaprenyl phosphate + lipid IVA = lipid IIA + di-trans,octa-cis-undecaprenyl phosphate.. Its pathway is lipopolysaccharide metabolism; 4-amino-4-deoxy-beta-L-arabinose-lipid A biosynthesis. In terms of biological role, catalyzes the transfer of the L-Ara4N moiety of the glycolipid undecaprenyl phosphate-alpha-L-Ara4N to lipid A. The modified arabinose is attached to lipid A and is required for resistance to polymyxin and cationic antimicrobial peptides. In Yersinia pseudotuberculosis serotype O:3 (strain YPIII), this protein is Undecaprenyl phosphate-alpha-4-amino-4-deoxy-L-arabinose arabinosyl transferase.